The following is a 308-amino-acid chain: Glutaminase (308 aa).

The substrate site is built by serine 66, asparagine 117, glutamate 161, asparagine 168, tyrosine 192, tyrosine 244, and valine 262.

Belongs to the glutaminase family. Homotetramer.

It catalyses the reaction L-glutamine + H2O = L-glutamate + NH4(+). The sequence is that of Glutaminase from Klebsiella pneumoniae (strain 342).